The sequence spans 256 residues: Proteasome subunit alpha (256 aa).

Residues 226-256 (LLPSQEESGSTDGEASGDAGDDKKTGDDKKS) form a disordered region. Positions 245–256 (GDDKKTGDDKKS) are enriched in basic and acidic residues.

Belongs to the peptidase T1A family. The 20S proteasome core is composed of 14 alpha and 14 beta subunits that assemble into four stacked heptameric rings, resulting in a barrel-shaped structure. The two inner rings, each composed of seven catalytic beta subunits, are sandwiched by two outer rings, each composed of seven alpha subunits. The catalytic chamber with the active sites is on the inside of the barrel. Has a gated structure, the ends of the cylinder being occluded by the N-termini of the alpha-subunits. Is capped by the proteasome-associated ATPase, ARC.

Its subcellular location is the cytoplasm. It functions in the pathway protein degradation; proteasomal Pup-dependent pathway. Its activity is regulated as follows. The formation of the proteasomal ATPase ARC-20S proteasome complex, likely via the docking of the C-termini of ARC into the intersubunit pockets in the alpha-rings, may trigger opening of the gate for substrate entry. Interconversion between the open-gate and close-gate conformations leads to a dynamic regulation of the 20S proteasome proteolysis activity. Functionally, component of the proteasome core, a large protease complex with broad specificity involved in protein degradation. The sequence is that of Proteasome subunit alpha from Saccharopolyspora erythraea (strain ATCC 11635 / DSM 40517 / JCM 4748 / NBRC 13426 / NCIMB 8594 / NRRL 2338).